Consider the following 35-residue polypeptide: Kappa-theraphotoxin-Gr1b (35 aa).

3 disulfide bridges follow: C2–C16, C9–C21, and C15–C28. The segment at 4–6 (YLF) is involved in active face.

The protein belongs to the neurotoxin 10 (Hwtx-1) family. 09 (HaTx) subfamily. In terms of tissue distribution, expressed by the venom gland.

Its subcellular location is the secreted. In terms of biological role, inhibitor of voltage-gated potassium channels. Inhibits Kv2.1/KCNB1 channels, by shifting activation of the channel to more depolarized voltages. The toxin binding sites may be situated on the S3-S4 extracellular linker of the channel. One, two, three or four toxin molecules may bind the Kv2.1/KCNB1 channel. May need to partition into the membrane in order to bind to the channel. Antibacterial activity is not observed. The sequence is that of Kappa-theraphotoxin-Gr1b from Grammostola rosea (Chilean rose tarantula).